The following is a 235-amino-acid chain: Small ribosomal subunit protein uS2c (235 aa).

It belongs to the universal ribosomal protein uS2 family.

The protein resides in the plastid. It localises to the chloroplast. The sequence is that of Small ribosomal subunit protein uS2c (rps2) from Cryptomeria japonica (Japanese cedar).